Consider the following 376-residue polypeptide: PqqA peptide cyclase (376 aa).

In terms of domain architecture, Radical SAM core spans 4-219 (VPPPLSVLLE…VETARRSLGD (216 aa)). C18, C22, and C25 together coordinate [4Fe-4S] cluster.

It belongs to the radical SAM superfamily. PqqE family. In terms of assembly, interacts with PqqD. The interaction is necessary for activity of PqqE. [4Fe-4S] cluster is required as a cofactor.

It carries out the reaction [PQQ precursor protein] + S-adenosyl-L-methionine = E-Y cross-linked-[PQQ precursor protein] + 5'-deoxyadenosine + L-methionine + H(+). The protein operates within cofactor biosynthesis; pyrroloquinoline quinone biosynthesis. Catalyzes the cross-linking of a glutamate residue and a tyrosine residue in the PqqA protein as part of the biosynthesis of pyrroloquinoline quinone (PQQ). The polypeptide is PqqA peptide cyclase (Xanthomonas campestris pv. campestris (strain B100)).